The following is a 686-amino-acid chain: Probable metal-nicotianamine transporter YSL10 (686 aa).

Helical transmembrane passes span Val36 to Met56, Leu60 to Leu80, Cys109 to Met129, Leu151 to Pro171, Met212 to Gly232, Leu271 to Ile291, Val316 to Thr336, Ile383 to Val403, Val415 to Leu435, Gly461 to Ser481, Phe501 to Leu521, Gly556 to Val576, Met597 to Ile617, and Gly639 to Val659.

It belongs to the YSL (TC 2.A.67.2) family.

It localises to the membrane. Its function is as follows. May be involved in the transport of nicotianamine-chelated metals. The sequence is that of Probable metal-nicotianamine transporter YSL10 (YSL10) from Oryza sativa subsp. japonica (Rice).